Consider the following 766-residue polypeptide: Ubiquitin carboxyl-terminal hydrolase creB (766 aa).

The tract at residues 1-32 (MGSFLKSFRKDVGSAAPSVGAPPAKKEPQPLP) is disordered. A compositionally biased stretch (low complexity) spans 13 to 23 (GSAAPSVGAPP). The USP domain maps to 55–466 (YGMENFGNTC…CAYVLFYQET (412 aa)). The active-site Nucleophile is the C64. Disordered regions lie at residues 115–145 (EALA…KDSP) and 243–266 (ESPQ…SRTP). Over residues 249 to 263 (SDVSDSVIPSSSSGS) the composition is skewed to low complexity. The active-site Proton acceptor is the H417. The tract at residues 526–752 (APTAPQLSTH…HDRSSHGKWR (227 aa)) is disordered. The span at 548–572 (SPAPDPAPLTSLPPIPPIPETPPAP) shows a compositional bias: pro residues. The stretch at 573 to 620 (LTSRKSDLQSKKERVKEEKERKAAEKEKEKQRRKEIETRLKDRQRRED) forms a coiled coil. Basic and acidic residues-rich tracts occupy residues 576–643 (RKSD…RNHA) and 734–747 (EQEH…DRSS).

Belongs to the peptidase C19 family. As to quaternary structure, interacts with creA, creC and qutD.

The enzyme catalyses Thiol-dependent hydrolysis of ester, thioester, amide, peptide and isopeptide bonds formed by the C-terminal Gly of ubiquitin (a 76-residue protein attached to proteins as an intracellular targeting signal).. In terms of biological role, ubiquitin thioesterase component of the regulatory network controlling carbon source utilization through ubiquitination and deubiquitination involving creA, creB, creC, creD and acrB. Deubiquitinates the creA catabolic repressor and the quinate permease qutD. Also plays a role in response to carbon starvation and the control of extracellular proteases activity. The chain is Ubiquitin carboxyl-terminal hydrolase creB (creB) from Emericella nidulans (strain FGSC A4 / ATCC 38163 / CBS 112.46 / NRRL 194 / M139) (Aspergillus nidulans).